We begin with the raw amino-acid sequence, 493 residues long: 3-octaprenyl-4-hydroxybenzoate carboxy-lyase (493 aa).

Residue N172 participates in Mn(2+) binding. Prenylated FMN contacts are provided by residues 175-177 (IYR), 189-191 (RWL), and 194-195 (RG). Residue E238 coordinates Mn(2+). The active-site Proton donor is the D287.

The protein belongs to the UbiD family. As to quaternary structure, homohexamer. Prenylated FMN is required as a cofactor. Requires Mn(2+) as cofactor.

It is found in the cell membrane. It carries out the reaction a 4-hydroxy-3-(all-trans-polyprenyl)benzoate + H(+) = a 2-(all-trans-polyprenyl)phenol + CO2. It participates in cofactor biosynthesis; ubiquinone biosynthesis. In terms of biological role, catalyzes the decarboxylation of 3-octaprenyl-4-hydroxy benzoate to 2-octaprenylphenol, an intermediate step in ubiquinone biosynthesis. This chain is 3-octaprenyl-4-hydroxybenzoate carboxy-lyase, found in Shewanella pealeana (strain ATCC 700345 / ANG-SQ1).